The primary structure comprises 541 residues: Molybdate transporter 1 (541 aa).

Helical transmembrane passes span leucine 24–leucine 44, leucine 58–valine 78, threonine 98–leucine 118, alanine 137–tryptophan 157, and glycine 168–valine 188. Positions glutamine 193–lysine 213 are disordered. A run of 2 helical transmembrane segments spans residues methionine 214–valine 234 and methionine 287–alanine 307. Residues proline 317–glycine 366 form a disordered region. Residues aspartate 327–alanine 351 show a composition bias toward low complexity. The next 2 membrane-spanning stretches (helical) occupy residues isoleucine 413–leucine 433 and leucine 435–leucine 455. The segment at threonine 510–arginine 541 is disordered.

Belongs to the SLC26A/SulP transporter (TC 2.A.53) family.

It localises to the vacuole membrane. Exports stored molybdate from the vacuole into the cytosol, making it available for molybdate cofactor (Moco) biosynthesis. Plays a role in molybdate homeostasis as high cytosolic levels of molybdate are toxic to cells. Not required for molybdate import into cells. This Neurospora crassa (strain ATCC 24698 / 74-OR23-1A / CBS 708.71 / DSM 1257 / FGSC 987) protein is Molybdate transporter 1.